The following is a 136-amino-acid chain: Protein NrdI (136 aa).

Belongs to the NrdI family.

Functionally, probably involved in ribonucleotide reductase function. This Salmonella agona (strain SL483) protein is Protein NrdI.